The sequence spans 381 residues: Guanine nucleotide-binding protein G(olf) subunit alpha (381 aa).

Residues 1–25 (MGCLGNSSKTAEDQGVDEKERREAN) form a disordered region. Gly2 carries the N-palmitoyl glycine lipid modification. Residue Cys3 is the site of S-palmitoyl cysteine attachment. The segment covering 10–25 (TAEDQGVDEKERREAN) has biased composition (basic and acidic residues). A G-alpha domain is found at 41–381 (ATHRLLLLGA…RMHLKQYELL (341 aa)). Residues 44–57 (RLLLLGAGESGKST) are G1 motif. The GTP site is built by Glu52, Ser53, Gly54, Lys55, Ser56, and Thr57. Residue Ser56 coordinates Mg(2+). Position 178 is a phosphothreonine (Thr178). The segment at 183-191 (DLLRCRVLT) is G2 motif. GTP contacts are provided by Leu185, Arg186, and Thr191. Mg(2+) is bound by residues Thr191 and Asp210. A G3 motif region spans residues 206-215 (FHMFDVGGQR). Residues Gly213, Asn279, Lys280, Asp282, and Ala353 each coordinate GTP. The G4 motif stretch occupies residues 275-282 (ILFLNKQD). A G5 motif region spans residues 351 to 356 (TCAVDT).

It belongs to the G-alpha family. G(s) subfamily. As to quaternary structure, g proteins are composed of 3 units; alpha, beta and gamma. The alpha chain contains the guanine nucleotide binding site. Interacts with GAS2L2. Interacts (GDP-bound form) with RIC8B (via C-terminus); promoting GNAL folding and association with the plasma membrane.

Its subcellular location is the cell membrane. It carries out the reaction GTP + H2O = GDP + phosphate + H(+). In terms of biological role, guanine nucleotide-binding protein (G protein) involved as transducer in olfactory signal transduction controlled by G protein-coupled receptors (GPCRs). Contains the guanine nucleotide binding site and alternates between an active, GTP-bound state and an inactive, GDP-bound state. Signaling by an activated GPCR promotes GDP release and GTP binding. The alpha subunit has a low GTPase activity that converts bound GTP to GDP, thereby terminating the signal. Both GDP release and GTP hydrolysis are modulated by numerous regulatory proteins. GNAL/G(olf) alpha specifically mediates olfactory signal transduction within the olfactory neuroepithelium and the basal ganglia following GPCRs activation. Acts by promoting the specific activation of adenylyl cyclase ADCY3, resulting in increased levels of the signaling molecule cAMP. In Rattus norvegicus (Rat), this protein is Guanine nucleotide-binding protein G(olf) subunit alpha.